The sequence spans 438 residues: Gamma-glutamyl phosphate reductase (438 aa).

It belongs to the gamma-glutamyl phosphate reductase family.

It is found in the cytoplasm. The enzyme catalyses L-glutamate 5-semialdehyde + phosphate + NADP(+) = L-glutamyl 5-phosphate + NADPH + H(+). The protein operates within amino-acid biosynthesis; L-proline biosynthesis; L-glutamate 5-semialdehyde from L-glutamate: step 2/2. In terms of biological role, catalyzes the NADPH-dependent reduction of L-glutamate 5-phosphate into L-glutamate 5-semialdehyde and phosphate. The product spontaneously undergoes cyclization to form 1-pyrroline-5-carboxylate. This is Gamma-glutamyl phosphate reductase from Prochlorococcus marinus (strain NATL2A).